Consider the following 430-residue polypeptide: Replication protein A 32 kDa subunit C (430 aa).

Residues 14 to 46 (MPSQRSGAPAPEYSAAGTGAAAAPSPSKPRDPR) are disordered. Positions 23–38 (APEYSAAGTGAAAAPS) are enriched in low complexity. The OB DNA-binding region spans 86–160 (VRVLGRVVSV…QGLARSIRPI (75 aa)).

It belongs to the replication factor A protein 2 family. In terms of assembly, heterotrimer of RPA1, RPA2 and RPA3 (canonical replication protein A complex). Interacts with RPA1C and RPA3. Phosphorylated in a cell-cycle-dependent manner (from the S phase until mitosis). In response to DNA damage, recruited to DNA-repair nuclear foci, as a hypophosphorylated form.

It is found in the nucleus. Its function is as follows. Component of the replication protein A complex (RPA) required for DNA recombination, repair and replication. The activity of RPA is mediated by single-stranded DNA binding and protein interactions. The sequence is that of Replication protein A 32 kDa subunit C (RPA2C) from Oryza sativa subsp. japonica (Rice).